A 287-amino-acid chain; its full sequence is ATP synthase gamma chain (287 aa).

The protein belongs to the ATPase gamma chain family. As to quaternary structure, F-type ATPases have 2 components, CF(1) - the catalytic core - and CF(0) - the membrane proton channel. CF(1) has five subunits: alpha(3), beta(3), gamma(1), delta(1), epsilon(1). CF(0) has three main subunits: a, b and c.

It is found in the cell membrane. Functionally, produces ATP from ADP in the presence of a proton gradient across the membrane. The gamma chain is believed to be important in regulating ATPase activity and the flow of protons through the CF(0) complex. In Staphylococcus carnosus (strain TM300), this protein is ATP synthase gamma chain.